The primary structure comprises 165 residues: RNA pyrophosphohydrolase (165 aa).

The region spanning 6-149 (GYRPNVGIII…KQSVYHQALT (144 aa)) is the Nudix hydrolase domain. The Nudix box motif lies at 38 to 59 (GGVRENETPQQAVFRELKEEVG).

Belongs to the Nudix hydrolase family. RppH subfamily. A divalent metal cation serves as cofactor.

In terms of biological role, accelerates the degradation of transcripts by removing pyrophosphate from the 5'-end of triphosphorylated RNA, leading to a more labile monophosphorylated state that can stimulate subsequent ribonuclease cleavage. The protein is RNA pyrophosphohydrolase of Hydrogenovibrio crunogenus (strain DSM 25203 / XCL-2) (Thiomicrospira crunogena).